The following is a 237-amino-acid chain: uncharacterized protein (237 aa).

A Response regulatory domain is found at 3 to 116 (RILLVEDDER…VVMAKIKSVL (114 aa)). D52 is modified (4-aspartylphosphate). The segment at residues 131–229 (SRIVELGGLT…IRGQGYQFQV (99 aa)) is a DNA-binding region (ompR/PhoB-type).

In terms of processing, phosphorylated by YvcQ.

The protein localises to the cytoplasm. Member of the two-component regulatory system YvcQ/YvcP. This is an uncharacterized protein from Bacillus subtilis (strain 168).